Here is a 575-residue protein sequence, read N- to C-terminus: Sulfite reductase [NADPH] hemoprotein beta-component (575 aa).

C438, C444, C484, and C488 together coordinate [4Fe-4S] cluster. C488 serves as a coordination point for siroheme.

It belongs to the nitrite and sulfite reductase 4Fe-4S domain family. Alpha(8)-beta(8). The alpha component is a flavoprotein, the beta component is a hemoprotein. Requires siroheme as cofactor. The cofactor is [4Fe-4S] cluster.

The enzyme catalyses hydrogen sulfide + 3 NADP(+) + 3 H2O = sulfite + 3 NADPH + 4 H(+). It participates in sulfur metabolism; hydrogen sulfide biosynthesis; hydrogen sulfide from sulfite (NADPH route): step 1/1. Its function is as follows. Component of the sulfite reductase complex that catalyzes the 6-electron reduction of sulfite to sulfide. This is one of several activities required for the biosynthesis of L-cysteine from sulfate. This is Sulfite reductase [NADPH] hemoprotein beta-component from Vibrio atlanticus (strain LGP32) (Vibrio splendidus (strain Mel32)).